We begin with the raw amino-acid sequence, 288 residues long: G1/S-specific cyclin-D2 (288 aa).

The Cyclin N-terminal domain occupies 26 to 151; the sequence is LQNLLTIEER…VLGKLKWNLA (126 aa). Positions 264–288 are disordered; that stretch reads QHNGSKSVEDPDQATTPTDVRDVDL. Serine 270 carries the phosphoserine modification. Threonine 279 is modified (phosphothreonine).

The protein belongs to the cyclin family. Cyclin D subfamily. As to quaternary structure, interacts with either CDK4 or CDK6 protein kinase to form a serine/threonine kinase holoenzyme complex. The cyclin subunit imparts substrate specificity to the complex. Phosphorylation at Thr-279 by MAP kinases is required for ubiquitination and degradation by the DCX(AMBRA1) complex. In terms of processing, ubiquitinated by the DCX(AMBRA1) complex during the transition from G1 to S cell phase, leading to its degradation: ubiquitination is dependent on Thr-279 phosphorylation. The DCX(AMBRA1) complex represents the major regulator of CCND2 stability during the G1/S transition. Polyubiquitinated by the SCF(FBXL2) complex, leading to proteasomal degradation.

It is found in the nucleus. Its subcellular location is the cytoplasm. The protein localises to the nucleus membrane. In terms of biological role, regulatory component of the cyclin D2-CDK4 (DC) complex that phosphorylates and inhibits members of the retinoblastoma (RB) protein family including RB1 and regulates the cell-cycle during G(1)/S transition. Phosphorylation of RB1 allows dissociation of the transcription factor E2F from the RB/E2F complex and the subsequent transcription of E2F target genes which are responsible for the progression through the G(1) phase. Hypophosphorylates RB1 in early G(1) phase. Cyclin D-CDK4 complexes are major integrators of various mitogenenic and antimitogenic signals. This Rattus norvegicus (Rat) protein is G1/S-specific cyclin-D2 (Ccnd2).